A 157-amino-acid polypeptide reads, in one-letter code: Ribosome maturation factor RimP (157 aa).

This sequence belongs to the RimP family.

The protein localises to the cytoplasm. In terms of biological role, required for maturation of 30S ribosomal subunits. The chain is Ribosome maturation factor RimP from Geobacillus sp. (strain WCH70).